The chain runs to 136 residues: Small ribosomal subunit protein bS6 (136 aa).

Positions 99 to 136 are disordered; that stretch reads QSEMLKAEENRSERRERRERPEHGGHEGLDGDSDKADE. A compositionally biased stretch (basic and acidic residues) spans 103–136; the sequence is LKAEENRSERRERRERPEHGGHEGLDGDSDKADE.

It belongs to the bacterial ribosomal protein bS6 family.

In terms of biological role, binds together with bS18 to 16S ribosomal RNA. The sequence is that of Small ribosomal subunit protein bS6 from Azotobacter vinelandii (strain DJ / ATCC BAA-1303).